The chain runs to 490 residues: C-type lectin domain family 14 member A (490 aa).

The first 21 residues, 1-21, serve as a signal peptide directing secretion; that stretch reads MRPAFALCLLWQALWPGPGGG. The Extracellular segment spans residues 22 to 397; the sequence is EHPTADRAGC…TPQAFDSSSA (376 aa). A C-type lectin domain is found at 33–173; that stretch reads ASGACYSLHH…LRANGYLCKY (141 aa). Cys-143 and Cys-162 form a disulfide bridge. The N-linked (GlcNAc...) asparagine glycan is linked to Asn-189. Positions 245 to 287 constitute an EGF-like domain; that stretch reads PCPGRYLRAGKCAELPNCLDDLGGFACECATGFELGKDGRSCV. The disordered stretch occupies residues 286–349; sequence CVTSGEGQPT…VTSIPEIPRW (64 aa). Low complexity predominate over residues 301-315; it reads VPTRRPPATATSPVP. The N-linked (GlcNAc...) asparagine glycan is linked to Asn-381. The helical transmembrane segment at 398-418 threads the bilayer; it reads VVFIFVSTAVVVLVILTMTVL. The Cytoplasmic segment spans residues 419–490; the sequence is GLVKLCFHES…AESPLGSSDA (72 aa). Residues 428-461 are disordered; that stretch reads SPSSQPRKESMGPPGLESDPEPAALGSSSAHCTN.

Its subcellular location is the membrane. The sequence is that of C-type lectin domain family 14 member A (CLEC14A) from Homo sapiens (Human).